Consider the following 607-residue polypeptide: Chaperone protein DnaK (607 aa).

Residue threonine 173 is modified to Phosphothreonine; by autocatalysis. The span at 577–588 (AQAQQGAEGAAS) shows a compositional bias: low complexity. Residues 577-607 (AQAQQGAEGAASQDDDVVDADFTEVKDDDNK) are disordered. A compositionally biased stretch (acidic residues) spans 589–598 (QDDDVVDADF).

The protein belongs to the heat shock protein 70 family.

Acts as a chaperone. The polypeptide is Chaperone protein DnaK (Macrococcus caseolyticus (strain JCSC5402) (Macrococcoides caseolyticum)).